Reading from the N-terminus, the 887-residue chain is PAN2-PAN3 deadenylation complex subunit Pan3 (887 aa).

A C3H1-type zinc finger spans residues 49–77 (GVKLKYCRYYAKDKTCFYGEECQFLHEDP). 3 disordered regions span residues 111-139 (GGGA…GLDG), 280-307 (ENNL…SNVS), and 321-393 (PSMG…GQVI). The necessary and sufficient for interaction with PABPC1 but not needed for interaction with PAN2 stretch occupies residues 147-498 (MDGGALTDAS…PPPNRIQKSS (352 aa)). Composition is skewed to polar residues over residues 281–290 (NNLQTPNPTA) and 298–307 (GSTSRLSNVS). Positions 284 to 299 (QTPNPTASEFIPKGGS) match the PABPC-interacting motif-2 (PAM-2) motif. Phosphoserine is present on residues Ser-354 and Ser-361. Residues 463–750 (QIDQADMPAV…SVNDIMPMIG (288 aa)) are pseudokinase domain. Residues Arg-521, 570 to 577 (DFHAGGET), and 644 to 645 (TK) each bind ATP. Positions 789-887 (TINERPEFQK…ELIAAANGQL (99 aa)) are knob domain.

The protein belongs to the protein kinase superfamily. PAN3 family. Homodimer. Forms a heterotrimer with a catalytic subunit PAN2 to form the poly(A)-nuclease (PAN) deadenylation complex. Interacts (via PAM-2 motif) with poly(A)-binding protein PABPC1 (via PABC domain), conferring substrate specificity of the enzyme complex. Interacts with the GW182 family proteins TNRC6A, TNRC6B and TNRC6C. Interacts with YTHDF3. As to quaternary structure, interacts with PAN2. Interacts (via N-terminus) with PABPC1 at lower efficiency than isoform 3. In terms of assembly, interacts with PAN2. Interacts (via N-terminus) with PABPC1 at higher efficiency than isoform 1.

The protein resides in the cytoplasm. The protein localises to the P-body. Its subcellular location is the nucleus. Its function is as follows. Regulatory subunit of the poly(A)-nuclease (PAN) deadenylation complex, one of two cytoplasmic mRNA deadenylases involved in general and miRNA-mediated mRNA turnover. PAN specifically shortens poly(A) tails of RNA and the activity is stimulated by poly(A)-binding protein (PABP). PAN deadenylation is followed by rapid degradation of the shortened mRNA tails by the CCR4-NOT complex. Deadenylated mRNAs are then degraded by two alternative mechanisms, namely exosome-mediated 3'-5' exonucleolytic degradation, or deadenylation-dependent mRNA decapping and subsequent 5'-3' exonucleolytic degradation by XRN1. PAN3 acts as a regulator for PAN activity, recruiting the catalytic subunit PAN2 to mRNA via its interaction with RNA and PABP, and to miRNA targets via its interaction with GW182 family proteins. In terms of biological role, decreases PAN2-mediated deadenylation, possibly by preventing progression into the second CCR4-NOT mediated stage of biphasic deadenylation. Has a significant effect on mRNA stability, generally stabilizing a subset of the transcriptome. Stabilizes mRNAs degraded by the AU-rich element (ARE)-mediated mRNA decay pathway but promotes degradation of mRNAs by the microRNA-mediated pathway. Its activity influences mRNP remodeling, specifically reducing formation of a subset of P-bodies containing GW220, an isoform of TNRC6A. Functionally, enhances PAN2 deadenylase activity and has an extensive effect on mRNA stability, generally enhancing mRNA decay across the transcriptome by multiple pathways, including the AU-rich element (ARE)-mediated pathway, microRNA-mediated pathway and the nonsense-mediated pathway (NMD). Its activity is required for efficient P-body formation. May be involved in regulating mRNAs of genes involved in cell cycle progression and cell proliferation. The chain is PAN2-PAN3 deadenylation complex subunit Pan3 from Mus musculus (Mouse).